Consider the following 396-residue polypeptide: Flap endonuclease 1 (396 aa).

An N-domain region spans residues 1–105 (MGIHGLTKLL…DQLAQRTERR (105 aa)). Asp-34 is a binding site for Mg(2+). Residue Arg-71 coordinates DNA. Positions 87, 159, 161, 180, and 182 each coordinate Mg(2+). The segment at 123–254 (AIEKYSKRSV…VRALQMIKKH (132 aa)) is I-domain. A DNA-binding site is contributed by Glu-159. DNA contacts are provided by Gly-232 and Asp-234. Asp-234 is a Mg(2+) binding site. The interval 338 to 346 (NQGRLESFF) is interaction with PCNA. Residues 341 to 396 (RLESFFTSLPKPATADKAKPKEDDKKRKAGAAAGGKDAKGGAAAKKGKFGVGGGKK) form a disordered region. Over residues 354 to 366 (TADKAKPKEDDKK) the composition is skewed to basic and acidic residues. Positions 370–384 (GAAAGGKDAKGGAAA) are enriched in low complexity.

The protein belongs to the XPG/RAD2 endonuclease family. FEN1 subfamily. In terms of assembly, interacts with PCNA. Three molecules of FEN1 bind to one PCNA trimer with each molecule binding to one PCNA monomer. PCNA stimulates the nuclease activity without altering cleavage specificity. The cofactor is Mg(2+). Post-translationally, phosphorylated. Phosphorylation upon DNA damage induces relocalization to the nuclear plasma.

It is found in the nucleus. Its subcellular location is the nucleolus. It localises to the nucleoplasm. The protein localises to the mitochondrion. Structure-specific nuclease with 5'-flap endonuclease and 5'-3' exonuclease activities involved in DNA replication and repair. During DNA replication, cleaves the 5'-overhanging flap structure that is generated by displacement synthesis when DNA polymerase encounters the 5'-end of a downstream Okazaki fragment. It enters the flap from the 5'-end and then tracks to cleave the flap base, leaving a nick for ligation. Also involved in the long patch base excision repair (LP-BER) pathway, by cleaving within the apurinic/apyrimidinic (AP) site-terminated flap. Acts as a genome stabilization factor that prevents flaps from equilibrating into structures that lead to duplications and deletions. Also possesses 5'-3' exonuclease activity on nicked or gapped double-stranded DNA, and exhibits RNase H activity. Also involved in replication and repair of rDNA and in repairing mitochondrial DNA. The protein is Flap endonuclease 1 of Chlamydomonas reinhardtii (Chlamydomonas smithii).